The following is a 118-amino-acid chain: Large ribosomal subunit protein bL20 (118 aa).

Belongs to the bacterial ribosomal protein bL20 family.

Functionally, binds directly to 23S ribosomal RNA and is necessary for the in vitro assembly process of the 50S ribosomal subunit. It is not involved in the protein synthesizing functions of that subunit. The chain is Large ribosomal subunit protein bL20 from Ralstonia pickettii (strain 12J).